The following is a 242-amino-acid chain: Response regulator GtcR (242 aa).

In terms of domain architecture, Response regulatory spans 4–117 (TILIADDEPE…EAVARIQAQL (114 aa)). Asp-53 carries the 4-aspartylphosphate modification. The segment at residues 133 to 233 (TQSTTVGRLT…VRGLGYKFAS (101 aa)) is a DNA-binding region (ompR/PhoB-type).

Phosphorylated by GtcS.

Functionally, member of the two-component regulatory system GtcS/GtcR which may act in the control of the transcription of the grs operon which encodes the multienzymes involved in the biosynthesis of the peptide antibiotic gramicidin S. The chain is Response regulator GtcR (gtcR) from Aneurinibacillus migulanus (Bacillus migulanus).